The primary structure comprises 63 residues: MPKMKTHRGSAKRFRRTGTGKLRRFKAYASHLTGKKSAKRIRNLRKGTTVSEADMKRIDKMIP.

The protein belongs to the bacterial ribosomal protein bL35 family.

The chain is Large ribosomal subunit protein bL35 from Finegoldia magna (strain ATCC 29328 / DSM 20472 / WAL 2508) (Peptostreptococcus magnus).